A 180-amino-acid chain; its full sequence is MIIYLHGFDSNSPGNHEKVLQLQFIDPDVRLVSYSTRHPKHDMQHLLKEVDKMLQLNVDERPLICGVGLGGYWAERIGFLCDIRQVVFNPNLFPYENMEGKIDRPEEYADIATKCVTNFREKNRDRCLVILSRHDEALDSQRSAQALHPYYEIVWDEEQTHKFKNISPHLQRIKAFKTLG.

This sequence belongs to the UPF0227 family.

This is UPF0227 protein YcfP from Salmonella choleraesuis (strain SC-B67).